Here is a 305-residue protein sequence, read N- to C-terminus: Ribonuclease BN (305 aa).

Residues histidine 64, histidine 66, aspartate 68, histidine 69, histidine 141, aspartate 212, and histidine 270 each coordinate Zn(2+). Catalysis depends on aspartate 68, which acts as the Proton acceptor.

This sequence belongs to the RNase Z family. RNase BN subfamily. Homodimer. Requires Zn(2+) as cofactor.

Its function is as follows. Zinc phosphodiesterase, which has both exoribonuclease and endoribonuclease activities. In Escherichia coli O6:K15:H31 (strain 536 / UPEC), this protein is Ribonuclease BN.